A 314-amino-acid chain; its full sequence is Transcriptional activator RhrA (314 aa).

One can recognise an HTH araC/xylS-type domain in the interval 210–310; that stretch reads ASIKMRVEQN…GVRPSDLRRL (101 aa). 2 DNA-binding regions (H-T-H motif) span residues 228 to 249 and 277 to 300; these read TDVA…SREG and ISQI…RSRY.

In terms of biological role, transcriptional activator of the rhizobactin regulon. This chain is Transcriptional activator RhrA (rhrA), found in Rhizobium meliloti (strain 1021) (Ensifer meliloti).